Reading from the N-terminus, the 429-residue chain is D-inositol 3-phosphate glycosyltransferase (429 aa).

H20 serves as a coordination point for 1D-myo-inositol 3-phosphate. Residues 26 to 27 (QP) and G34 each bind UDP-N-acetyl-alpha-D-glucosamine. 1D-myo-inositol 3-phosphate contacts are provided by residues 31-36 (DAGGMN), K89, Y122, T146, and R166. Residues R240, K245, and Q306 each contribute to the UDP-N-acetyl-alpha-D-glucosamine site. Residues Y315, R316, and A318 each coordinate Mg(2+). Residues E328 and E336 each coordinate UDP-N-acetyl-alpha-D-glucosamine. T342 is a binding site for Mg(2+).

It belongs to the glycosyltransferase group 1 family. MshA subfamily. As to quaternary structure, homodimer.

It catalyses the reaction 1D-myo-inositol 3-phosphate + UDP-N-acetyl-alpha-D-glucosamine = 1D-myo-inositol 2-acetamido-2-deoxy-alpha-D-glucopyranoside 3-phosphate + UDP + H(+). Catalyzes the transfer of a N-acetyl-glucosamine moiety to 1D-myo-inositol 3-phosphate to produce 1D-myo-inositol 2-acetamido-2-deoxy-glucopyranoside 3-phosphate in the mycothiol biosynthesis pathway. The protein is D-inositol 3-phosphate glycosyltransferase of Nocardiopsis dassonvillei (strain ATCC 23218 / DSM 43111 / CIP 107115 / JCM 7437 / KCTC 9190 / NBRC 14626 / NCTC 10488 / NRRL B-5397 / IMRU 509) (Actinomadura dassonvillei).